Here is a 593-residue protein sequence, read N- to C-terminus: Elongation factor 4 (593 aa).

The tr-type G domain maps to 2–181 (KNIRNFCIIA…AVVERIPHPT (180 aa)). Residues 14-19 (DHGKST) and 128-131 (NKCD) contribute to the GTP site.

The protein belongs to the TRAFAC class translation factor GTPase superfamily. Classic translation factor GTPase family. LepA subfamily.

The protein localises to the cell inner membrane. The enzyme catalyses GTP + H2O = GDP + phosphate + H(+). In terms of biological role, required for accurate and efficient protein synthesis under certain stress conditions. May act as a fidelity factor of the translation reaction, by catalyzing a one-codon backward translocation of tRNAs on improperly translocated ribosomes. Back-translocation proceeds from a post-translocation (POST) complex to a pre-translocation (PRE) complex, thus giving elongation factor G a second chance to translocate the tRNAs correctly. Binds to ribosomes in a GTP-dependent manner. The protein is Elongation factor 4 of Phocaeicola vulgatus (strain ATCC 8482 / DSM 1447 / JCM 5826 / CCUG 4940 / NBRC 14291 / NCTC 11154) (Bacteroides vulgatus).